The primary structure comprises 380 residues: Tubby-like F-box protein 9 (380 aa).

The F-box domain occupies 30-76; the sequence is PFSWSELPEELLREILIRVETVDGGDWPSRRNVVACAGVCRSWRILT. The tract at residues 258–283 is disordered; the sequence is SSRSSPVFRSHSKPLRSNSASCSDSG. Over residues 272–283 the composition is skewed to polar residues; it reads LRSNSASCSDSG.

Belongs to the TUB family. As to quaternary structure, part of a SCF (SKP1-cullin-F-box) protein ligase complex. Interacts with SKP1A/ASK1 and XERICO. In terms of tissue distribution, ubiquitous.

The protein operates within protein modification; protein ubiquitination. Functionally, component of SCF(ASK-cullin-F-box) E3 ubiquitin ligase complexes, which may mediate the ubiquitination and subsequent proteasomal degradation of target proteins. Confers sensitivity to ABA during seed germination and early seedling development. This is Tubby-like F-box protein 9 from Arabidopsis thaliana (Mouse-ear cress).